We begin with the raw amino-acid sequence, 392 residues long: MTKKLFMFEKPLGMRDTLPFLYEIKKRVRQAMIREIETWGYELIETPTLEYYETVGTVSAIDDHQLFKLLDQQGHTLVLRPDMTAPIARLAASRLYKEGNPLRLAYNANVFRAQQREGGRPAEFEQIGVECIGDGTVAADAEVISVMIAALRQAGLQHFTVTIGHIGYVNALFLEIVGNEERASVLRRFLYEKNYVGYREHVKSLPLSSIDQKRLLQLLHLHGNDMTMEEAKELVHSEEGKRAVDDLCELSNALQLYGVDDVVKIDMTLVSHMSYYTGILFEVYAEHVGFPIGNGGRYDELLEKFSRKAPATGFGIRVDRLIEALGESEEEAAIECIVFSQERFAEAIELARTKRREGKRVVLQHISGIRDIDAYSKRYKPITYLLGSTEKE.

Belongs to the class-II aminoacyl-tRNA synthetase family. HisZ subfamily. In terms of assembly, heteromultimer composed of HisG and HisZ subunits.

The protein resides in the cytoplasm. The protein operates within amino-acid biosynthesis; L-histidine biosynthesis; L-histidine from 5-phospho-alpha-D-ribose 1-diphosphate: step 1/9. Required for the first step of histidine biosynthesis. May allow the feedback regulation of ATP phosphoribosyltransferase activity by histidine. The chain is ATP phosphoribosyltransferase regulatory subunit from Geobacillus sp. (strain WCH70).